A 149-amino-acid polypeptide reads, in one-letter code: Probable flagellum biosynthesis repressor protein FlbT (149 aa).

It belongs to the FlbT family.

Its function is as follows. Has a post-transcriptional repressor function in flagellum biogenesis. Associates with the 5'-UTR of fljK mRNA and promotes its degradation. In Agrobacterium fabrum (strain C58 / ATCC 33970) (Agrobacterium tumefaciens (strain C58)), this protein is Probable flagellum biosynthesis repressor protein FlbT.